A 131-amino-acid polypeptide reads, in one-letter code: MKKHGVLNSEIAAVLASLGHTDTIVIADCGLPIPDGVKRIDLAVEIGKPSFLDVLQVVADDMAIEKVTLAEEVINNNAEVNKEIELKLIEPAFEYVSHEQFKEHTKKAKAIIRTGEATPYANVILHAGVIF.

His20 serves as the catalytic Proton donor. Substrate-binding positions include Asp28, His98, and 120–122 (YAN).

This sequence belongs to the RbsD / FucU family. RbsD subfamily. In terms of assembly, homodecamer.

It is found in the cytoplasm. It carries out the reaction beta-D-ribopyranose = beta-D-ribofuranose. The protein operates within carbohydrate metabolism; D-ribose degradation; D-ribose 5-phosphate from beta-D-ribopyranose: step 1/2. Its function is as follows. Catalyzes the interconversion of beta-pyran and beta-furan forms of D-ribose. This Bacillus cereus (strain AH187) protein is D-ribose pyranase.